Here is a 1289-residue protein sequence, read N- to C-terminus: Ethylene-insensitive protein 2.1 (1289 aa).

The next 5 helical transmembrane spans lie at 18 to 38 (LLPAVGPGLLIAIGYVDPGKW), 48 to 68 (FGFDLVLPMLLFNFVAILCQY), 96 to 116 (FLGVQAALSVIALDLTMILGI), 128 to 148 (LSTCVSLAAAEAILFPFFATL), and 155 to 175 (SFLCTCIAGFILLLYFFGVLI). N-linked (GlcNAc...) asparagine glycosylation is present at Asn-185. A helical transmembrane segment spans residues 199–219 (LMSLLGASIMPHNFFLHSAIV). Residue Asn-227 is glycosylated (N-linked (GlcNAc...) asparagine). The next 7 helical transmembrane spans lie at 235–255 (LNHFFAILCIFSGIYLVNFVL), 260–280 (ANVFHSTGLVLLTFPDAMSLM), 288–308 (VAPFGFSLILFFANQITAFSW), 335–355 (IIAVVPALYCVWTSGVEGIYQ), 356–376 (LLILTQVMVALLLPSSVIPLF), 393–413 (FLEFVALISFMGMLGIKIIFV), and 439–459 (YIVLLITACSSFCLMLWLAAT). N-linked (GlcNAc...) asparagine glycosylation is present at Asn-521. The segment at 611–659 (LHTEKEDDEGDNWEPEDSSKGVPGSTLSLTSDGPGSFRSLSGKSDAGGN) is disordered. Residues 616–626 (EDDEGDNWEPE) are compositionally biased toward acidic residues. A compositionally biased stretch (polar residues) spans 635–652 (STLSLTSDGPGSFRSLSG). Residues Ser-646 and Ser-663 each carry the phosphoserine modification. A glycan (N-linked (GlcNAc...) asparagine) is linked at Asn-745. The tract at residues 792-816 (SIADSSERRYSGVRTPPSSDGWDNQ) is disordered. The segment covering 807–816 (PPSSDGWDNQ) has biased composition (polar residues). Thr-819 bears the Phosphothreonine mark. Ser-923 bears the Phosphoserine mark. N-linked (GlcNAc...) asparagine glycosylation is present at Asn-1025. The tract at residues 1208–1227 (HRSSPPASNGMLPPASKPGR) is disordered. The Nuclear localization signal motif lies at 1274-1281 (LKRYKRRL).

This sequence belongs to the NRAMP (TC 2.A.55) family.

It localises to the endoplasmic reticulum membrane. The protein localises to the nucleus. It is found in the cytoplasm. Central factor in signaling pathways regulated by ethylene (ET) and involved in various processes including development, plant defense, senescence, nucleotide sugar flux, and tropisms. Its function is as follows. Trafficking signal inducing ethylene response. The nuclear localization is both necessary and sufficient to activate EIN3-mediated transcription and ethylene responses. This chain is Ethylene-insensitive protein 2.1, found in Populus trichocarpa (Western balsam poplar).